Consider the following 184-residue polypeptide: Adenine phosphoribosyltransferase (184 aa).

The protein belongs to the purine/pyrimidine phosphoribosyltransferase family. In terms of assembly, homodimer.

It is found in the cytoplasm. The enzyme catalyses AMP + diphosphate = 5-phospho-alpha-D-ribose 1-diphosphate + adenine. It functions in the pathway purine metabolism; AMP biosynthesis via salvage pathway; AMP from adenine: step 1/1. Catalyzes a salvage reaction resulting in the formation of AMP, that is energically less costly than de novo synthesis. In Myxococcus xanthus (strain DK1622), this protein is Adenine phosphoribosyltransferase.